We begin with the raw amino-acid sequence, 1945 residues long: MMATHWTGLPEEDGDKLKACGAASACEVSKNKDGKDQGEPVSPSEDEPFSWPGPKTVMLKRTSQGFGFTLRHFIVYPPESAIQFSYKDEENGNRGGKQRNRLEPMDTIFVKQVKEGGPAFEAGLCTGDRIIKVNGESVIGKTYSQVIALIQNSDTTLELSVMPKDEDILQVAYSQDAYLKGNEAYSGNARNIPEPPPVCYPWLPSTPSATAQPVETCPPDSLPNKQQTSAPVLTQPGRAYRMEIQVPPSPTDVAKSNTAVCVCNESVRTVIVPSEKVVDLLANRNNPSGPSHRTEEVRYGVNEQASTKAASRTTSPASVPTAHLIHQTTGSRSLEPSGILLKSGNYSGHSEGISSSRSQAVDSPPVSVNHYSANSHQHIDWKNYKTYKEYIDNRRLHIGCRTIQERLDSLRAASQSAADYNQVVPTRTTLQVRRRSTSHDRVPQSVQIRQRSVSQERLEDSVLMKYCPRSASQGALTSPPVSFNNHRTRSWDYIEGQTEATATVNSESQIPDSNGERKQTYKWSGFTEQDDRRGIHERPRQQEMHKPFRGSNLTVAPVVNSDNRRLVGRGVGPVSQFKKIPPDLRPPHSNRNFPTTTGVSLQRGIAQDRSPLVKVRSNSLKVPPPPVSKPSFSQHSLASMKDQRPVNHLHQHSVLSQQTQFRSESTFEHQLETEVSSCLPGTSAKTSPQLSENLGTSDLELPAIPRNGDINLQEAEIQQPDVLDNKESVILREKPQSGRQTPQPLRHQSYILAVNDQETGSDTTCWLPNDARREVHIKRMEERKASSTSPPGDSLASIPFIDEPTSPSIDHEIAHIPASAVISASTAHVPSIATVPPSLTTSAPLIRRQLSHDQESVGPPSLDGQHSSKTERSKSYDEGLDDYREDAKLSFKHVSSLKGIKITDSQKSSEDSGSRKGSSSEVFSDAAREGWLQFRPLVTDKGKRVGGSIRPWKQMYVVLRGHSLYLYKDRREQTTPSEEEQPISVNACLIDISYSETKRRNVFRLTTSDCECLFQAEDRDDMLSWIKTIQESSNLNEEDTGVTNRDLISRRIKEYNSLLSKTEQLPKTPRQSLSIRQTLLGAKSEPKTQSPHSPKEESERKLLSKDDTSPPKDKGTWRRGIPSIVRKTFEKKPAATGTFGVRLDDCPPAHTNRYIPLIVDICCKLVEERGLEYTGIYRVPGNNAAISSMQEELNKGMADIDIQDDKWRDLNVISSLLKSFFRKLPEPLFTNDKYADFIEANRKEDPLDRLRTLKRLIHDLPEHHFETLKFLSAHLKTVAENSEKNKMEPRNLAIVFGPTLVRTSEDNMTHMVTHMPDQYKIVETLIQHHDWFFTEEGAEEPLTAVQEENTVDSQPVPNIDHLLTNIGRTGVLPGDVSDSATSDSAKSKGSWGSGKDQYSRELLVSSIFAAASRKRKKPKEKAQPSSSEDELDSVFFKKENTEQSHSEIKEESKRESETSGSKQRVVVAKESNTKKDSGTTKEEKKIPWEEPPPPHSSKRNRSPTLSCRLAMLKEGPRSLLTQKPHCEETGSDSGTLLSTSSQASLLRSSTKKSTSPETKHSEFLSIAGTTTSDYSTTSSTTYLTSLDSSRLSPEVQSVAESKGDEADDERSELVSEGRPVETDSESEFPVFPTTLTSDRLFRGKFQEVARVSRRNSEGSEASCTEGSLTPSLDSRRQQFSSHRLIECDTLSRKKSARFKSDSGSPGDTRTEKETPALAKMFDVMKKGKSTGSLLTPSRSESEKQEATWKTKIADRLKLRPRAPADDMFGVGNQKPTAETAKRKNIKRRHTLGGHRDATEISVLSFWKAHEQSADKESELSAVNRLKPKCSAQDLSISDWLARERVRTSASDLSRGEGLEPQAESPSVLGTPISTHSPPSQQPEARVAATSTLASTSQSPLFTPPQSPDQINRESFQNMSQNASSTANIHPHKQSESPDTKAETPP.

Residues 26-53 (CEVSKNKDGKDQGEPVSPSEDEPFSWPG) form a disordered region. Residues 29–38 (SKNKDGKDQG) show a composition bias toward basic and acidic residues. S42 and S63 each carry phosphoserine. Residues 56–165 (TVMLKRTSQG…TLELSVMPKD (110 aa)) enclose the PDZ domain. 2 disordered regions span residues 210 to 229 (TAQP…QQTS) and 326 to 365 (HQTT…DSPP). A compositionally biased stretch (low complexity) spans 347–358 (SGHSEGISSSRS). S454 is modified (phosphoserine). Residues 499–512 (EATATVNSESQIPD) show a composition bias toward polar residues. A disordered region spans residues 499–519 (EATATVNSESQIPDSNGERKQ). Residues R549 and R569 each carry the omega-N-methylarginine modification. Disordered stretches follow at residues 573 to 647 (PVSQ…RPVN) and 674 to 702 (EVSS…LELP). Residues 589–600 (SNRNFPTTTGVS) show a composition bias toward polar residues. Phosphoserine is present on residues S610 and S619. Positions 674-696 (EVSSCLPGTSAKTSPQLSENLGT) are enriched in polar residues. The residue at position 741 (T741) is a Phosphothreonine. 3 positions are modified to phosphoserine: S851, S856, and S875. Disordered stretches follow at residues 852-879 (HDQE…YDEG) and 902-921 (ITDS…SSSE). Positions 866–879 (HSSKTERSKSYDEG) are enriched in basic and acidic residues. Y876 carries the post-translational modification Phosphotyrosine. 5 positions are modified to phosphoserine: S918, S920, S948, S1093, and S1109. Residues 924–1091 (SDAAREGWLQ…AKSEPKTQSP (168 aa)) form an interaction with ARF1 and ARF6 region. Residues 925 to 1034 (DAAREGWLQF…WIKTIQESSN (110 aa)) enclose the PH domain. Residues 1080–1120 (LGAKSEPKTQSPHSPKEESERKLLSKDDTSPPKDKGTWRRG) form a disordered region. The span at 1093-1116 (SPKEESERKLLSKDDTSPPKDKGT) shows a compositional bias: basic and acidic residues. The Rho-GAP domain occupies 1141-1333 (VRLDDCPPAH…TLIQHHDWFF (193 aa)). Disordered stretches follow at residues 1373–1396 (PGDV…SGKD), 1412–1632 (SRKR…PVFP), 1649–1794 (ARVS…LGGH), and 1846–1945 (RTSA…ETPP). The span at 1377–1395 (SDSATSDSAKSKGSWGSGK) shows a compositional bias: low complexity. S1412, S1426, and S1427 each carry phosphoserine. 2 stretches are compositionally biased toward basic and acidic residues: residues 1435–1457 (FFKK…RESE) and 1471–1488 (SNTK…KIPW). K1438 participates in a covalent cross-link: Glycyl lysine isopeptide (Lys-Gly) (interchain with G-Cter in SUMO). The residue at position 1504 (T1504) is a Phosphothreonine. 2 stretches are compositionally biased toward low complexity: residues 1531–1556 (SDSG…STSP) and 1569–1589 (TTTS…LDSS). The interval 1579-1848 (STTYLTSLDS…WLARERVRTS (270 aa)) is interaction with CTNNA1. Over residues 1590-1599 (RLSPEVQSVA) the composition is skewed to polar residues. The segment covering 1611-1621 (SELVSEGRPVE) has biased composition (basic and acidic residues). Residue S1656 is modified to Phosphoserine. Polar residues-rich tracts occupy residues 1658 to 1681 (GSEA…QFSS) and 1729 to 1738 (STGSLLTPSR). Phosphothreonine is present on T1669. S1729 is modified (phosphoserine). The span at 1739–1757 (SESEKQEATWKTKIADRLK) shows a compositional bias: basic and acidic residues. Residues 1782–1792 (RKNIKRRHTLG) show a composition bias toward basic residues. Polar residues predominate over residues 1871-1882 (PISTHSPPSQQP). Residues 1887 to 1896 (AATSTLASTS) show a composition bias toward low complexity. The residue at position 1902 (T1902) is a Phosphothreonine. The residue at position 1906 (S1906) is a Phosphoserine. Over residues 1907–1927 (PDQINRESFQNMSQNASSTAN) the composition is skewed to polar residues. Basic and acidic residues predominate over residues 1932-1945 (KQSESPDTKAETPP).

In terms of assembly, interacts with CTNNA1. Interacts with GTP-bound ARF1 and probably ARF6. In terms of processing, sumoylated with SUMO2 and SUMO3 in proliferating lymphocytes.

Its subcellular location is the golgi apparatus membrane. The protein resides in the cell junction. It is found in the cytoplasmic vesicle membrane. It localises to the cytoplasm. The protein localises to the cytoskeleton. Functionally, functions as a GTPase-activating protein (GAP) for RHOA and CDC42. Downstream partner of ARF1 which may control Golgi apparatus structure and function. Also required for CTNNA1 recruitment to adherens junctions. The protein is Rho GTPase-activating protein 21 of Mus musculus (Mouse).